Here is a 941-residue protein sequence, read N- to C-terminus: Bifunctional glutamine synthetase adenylyltransferase/adenylyl-removing enzyme (941 aa).

The segment at 1-437 (MPMPTVSMSP…AAEFAELLAP (437 aa)) is adenylyl removase. The adenylyl transferase stretch occupies residues 444–941 (PDALADYWRA…FPLGKDETAL (498 aa)).

This sequence belongs to the GlnE family. The cofactor is Mg(2+).

It carries out the reaction [glutamine synthetase]-O(4)-(5'-adenylyl)-L-tyrosine + phosphate = [glutamine synthetase]-L-tyrosine + ADP. The catalysed reaction is [glutamine synthetase]-L-tyrosine + ATP = [glutamine synthetase]-O(4)-(5'-adenylyl)-L-tyrosine + diphosphate. Involved in the regulation of glutamine synthetase GlnA, a key enzyme in the process to assimilate ammonia. When cellular nitrogen levels are high, the C-terminal adenylyl transferase (AT) inactivates GlnA by covalent transfer of an adenylyl group from ATP to specific tyrosine residue of GlnA, thus reducing its activity. Conversely, when nitrogen levels are low, the N-terminal adenylyl removase (AR) activates GlnA by removing the adenylyl group by phosphorolysis, increasing its activity. The regulatory region of GlnE binds the signal transduction protein PII (GlnB) which indicates the nitrogen status of the cell. In Xanthomonas axonopodis pv. citri (strain 306), this protein is Bifunctional glutamine synthetase adenylyltransferase/adenylyl-removing enzyme.